The sequence spans 134 residues: Gastrin-releasing peptide (134 aa).

An N-terminal signal peptide occupies residues 1 to 23; the sequence is MRGREVPLVLLALVLCLAPRGWA. Met-50 is modified (methionine amide). Residues 54–134 constitute a propeptide that is removed on maturation; the sequence is SVAESPQLHE…QHEGRNPQLN (81 aa). The disordered stretch occupies residues 95–134; it reads GHQMPPWEPLSIHQPAWDSEDVSNFKDTGPQHEGRNPQLN. The span at 123 to 134 shows a compositional bias: basic and acidic residues; the sequence is GPQHEGRNPQLN.

It belongs to the bombesin/neuromedin-B/ranatensin family. Detected in adrenal medulla (at protein level).

It localises to the cytoplasmic vesicle. It is found in the secretory vesicle lumen. The protein resides in the secreted. Its subcellular location is the cell projection. The protein localises to the neuron projection. Its function is as follows. Stimulates the release of gastrin and other gastrointestinal hormones. Contributes to the perception of prurient stimuli and to the transmission of itch signals in the spinal cord that promote scratching behavior. Contributes primarily to nonhistaminergic itch sensation. In one study, shown to act in the amygdala as part of an inhibitory network which inhibits memory specifically related to learned fear. In another study, shown to act on vasoactive intestinal peptide (VIP)-expressing cells in the auditory cortex, most likely via extrasynaptic diffusion from local and long-range sources, to mediate disinhibition of glutamatergic cells via VIP cell-specific GRPR signaling which leads to enhanced auditory fear memories. Contributes to the regulation of food intake. Inhibits voltage-gated sodium channels but enhances voltage-gated potassium channels in hippocampal neurons. Induces sighing by acting directly on the pre-Botzinger complex, a cluster of several thousand neurons in the ventrolateral medulla responsible for inspiration during respiratory activity. Functionally, induces an itch response through activation of receptors present on mast cells, triggering mast cell degranulation. The protein is Gastrin-releasing peptide (GRP) of Bos taurus (Bovine).